Consider the following 871-residue polypeptide: Speckle targeted PIP5K1A-regulated poly(A) polymerase (871 aa).

The Matrin-type zinc-finger motif lies at 16 to 46 (FRCCLCHITTANQPSLDAHLGGRKHRHLVEL). Residues 56–128 (RSVFVSGFPR…RRLRVRPREQ (73 aa)) form the RRM domain. Position 205 (Ser205) interacts with ATP. Mg(2+) is bound by residues Asp216 and Asp218. UTP-binding residues include Asp216 and Asp218. The segment at 252–321 (QALACTPASP…QEDQGDGDQG (70 aa)) is disordered. A compositionally biased stretch (pro residues) spans 259 to 269 (ASPPDSQPPAS). Residue Asn392 participates in ATP binding. 4 residues coordinate UTP: Asn392, Arg414, Tyr432, and His547. The region spanning 489–547 (LSSLLAQFFSCVSCWDLRGSLLSLREGQALSVAGGLPSNLSEGLRLGPMNLQDPFDLSH) is the PAP-associated domain. The segment at 596–871 (SSPSSILSAT…LPQALRNLLK (276 aa)) is KA1; binds the bulging loops of U6 snRNA but is dispensable for terminal uridylyltransferase activity. A disordered region spans residues 636 to 684 (GTKRLRSEGGGPGEPPQGGTSKRAKLDGQKKSCEEGPEEQQGCAGEHGE). The segment covering 659-669 (AKLDGQKKSCE) has biased composition (basic and acidic residues). Ser748 carries the post-translational modification Phosphoserine.

The protein belongs to the DNA polymerase type-B-like family. As to quaternary structure, associates with the cleavage and polyadenylation specificity factor (CPSF) complex. Interacts with CPSF1 and CPSF3; the interaction is direct. Interacts with PIP5K1A. It depends on Mg(2+) as a cofactor. Mn(2+) is required as a cofactor. Post-translationally, phosphorylated by CK1 in the proline-rich (Pro-rich) region.

The protein resides in the nucleus. The protein localises to the nucleolus. It is found in the nucleus speckle. It carries out the reaction RNA(n) + UTP = RNA(n)-3'-uridine ribonucleotide + diphosphate. The catalysed reaction is RNA(n) + ATP = RNA(n)-3'-adenine ribonucleotide + diphosphate. Its activity is regulated as follows. Adenylyltransferase activity is specifically phosphatidylinositol 4,5-bisphosphate (PtdIns(4,5)P2). In terms of biological role, poly(A) polymerase that creates the 3'-poly(A) tail of specific pre-mRNAs. Localizes to nuclear speckles together with PIP5K1A and mediates polyadenylation of a select set of mRNAs, such as HMOX1. In addition to polyadenylation, it is also required for the 3'-end cleavage of pre-mRNAs: binds to the 3'UTR of targeted pre-mRNAs and promotes the recruitment and assembly of the CPSF complex on the 3'UTR of pre-mRNAs. In addition to adenylyltransferase activity, also has uridylyltransferase activity. However, the ATP ratio is higher than UTP in cells, suggesting that it functions primarily as a poly(A) polymerase. Acts as a specific terminal uridylyltransferase for U6 snRNA in vitro: responsible for a controlled elongation reaction that results in the restoration of the four 3'-terminal UMP-residues found in newly transcribed U6 snRNA. Not involved in replication-dependent histone mRNA degradation. The protein is Speckle targeted PIP5K1A-regulated poly(A) polymerase (TUT1) of Bos taurus (Bovine).